A 298-amino-acid chain; its full sequence is MDTSVPVISSDYIQSARTEYKLTNDESPITLQFPSTLERTRVRIMGKCMKVDHVVIEYRNQVPFNAQGSVIVTIRDTRLSDEQQDQAQFTFPIGCNVDLHYFSASYFSIDDNVPWQLLYKVEDSNVKNGVTFAQIKAKLKLSAAKHSTDIRFKQPTIKILSKDYGPDCVDFWSVGKPKPIRRLIQNEPGTDYDTGPKYRPITVQPGETWATKSTIGRSTSMRYTSPKQIDIDDSSSKQYASEAEFPLRGLHQLPEASLDPGDSVSQTQSMTKKDIESIIEQTVNKCLIAHRGSSHKDL.

Residues 253 to 273 are disordered; sequence LPEASLDPGDSVSQTQSMTKK.

Belongs to the begomovirus movement protein BC1 family. In terms of assembly, binds to dimeric supercoiled plasmid DNA. Post-translationally, phosphorylated.

Its subcellular location is the host cell membrane. It localises to the host microsome membrane. It is found in the host endoplasmic reticulum membrane. In terms of biological role, transports viral genome to neighboring plant cells directly through plasmosdesmata, without any budding. The movement protein allows efficient cell to cell propagation, by bypassing the host cell wall barrier. Begomovirus genome is shuttled out of nucleus by Nuclear shuttle protein (NSP) and the movement protein transports the DNA-NSP complex to cell plasmodesmata and facilitates further movement across the cell wall. The chain is Movement protein BC1 from Hewittia sublobata (Coralbush).